A 227-amino-acid polypeptide reads, in one-letter code: MINRYFITGTDTNIGKTISVCALLQYLNKLGNKSVGCKLISSGCKKIKNKIFNEDVVNIMKYNNIKFKYKDINPFAFLEKTAPHIASKRKNIFINHILLSNKLNKFLNYDIDYLIIEGFGGWKVPINSNSMYSEWVSNEKLPIILVVGIKLGCINHALLTIESIKNSNAIILGWIANHLEKDLINKNDYFKYLKKVIKYPLIGKIPFIKNKKNFSNLHKYIFLKKVI.

13–18 (NIGKTI) is a binding site for ATP. T17 contacts Mg(2+). Residue K38 is part of the active site. S42 provides a ligand contact to substrate. ATP-binding positions include D55, 117 to 120 (EGFG), 177 to 178 (NH), 206 to 208 (PFI), and N213. Residues D55 and E117 each coordinate Mg(2+).

This sequence belongs to the dethiobiotin synthetase family. Homodimer. It depends on Mg(2+) as a cofactor.

It is found in the cytoplasm. It catalyses the reaction (7R,8S)-7,8-diammoniononanoate + CO2 + ATP = (4R,5S)-dethiobiotin + ADP + phosphate + 3 H(+). It participates in cofactor biosynthesis; biotin biosynthesis; biotin from 7,8-diaminononanoate: step 1/2. Its function is as follows. Catalyzes a mechanistically unusual reaction, the ATP-dependent insertion of CO2 between the N7 and N8 nitrogen atoms of 7,8-diaminopelargonic acid (DAPA, also called 7,8-diammoniononanoate) to form a ureido ring. This is ATP-dependent dethiobiotin synthetase BioD from Wigglesworthia glossinidia brevipalpis.